The following is a 171-amino-acid chain: Anthrone oxygenase dmxR16 (171 aa).

A run of 3 helical transmembrane segments spans residues 21 to 41 (VIAAAFLSAITAGAMANISMI), 67 to 87 (GHIILPGICVGTCGLYAFSAL), and 96 to 116 (YALAGITTLSLVPFTWVFMTP). Residues Asn118 and Asn129 are each glycosylated (N-linked (GlcNAc...) asparagine). The helical transmembrane segment at 145–165 (WLHATRSMFPLIGAILGFTGI) threads the bilayer.

Belongs to the anthrone oxygenase family.

The protein resides in the membrane. It carries out the reaction emodin anthrone + O2 = emodin + H2O + H(+). The protein operates within secondary metabolite biosynthesis. Anthrone oxygenase; part of the gene cluster that mediates the biosynthesis of the dimeric xanthones cryptosporioptides. The pathway begins with the synthesis of atrochrysone thioester by the polyketide synthase dmx-nrPKS. The atrochrysone carboxyl ACP thioesterase dmxR1 then breaks the thioester bond and releases the atrochrysone carboxylic acid from dmx-nrPKS. Atrochrysone carboxylic acid is decarboxylated by the decarboxylase dmxR15, and oxidized by the anthrone oxygenase dmxR16 to yield emodin. Emodin is then reduced to emodin hydroquinone by the oxidoreductase dmxR7. A-ring reduction by the short chain dehydrogenase dmxR18, dehydration by the scytalone dehydratase-like protein dmxR17 and probable spontaneous re-oxidation, results in overall deoxygenation to chrysophanol. Baeyer-Villiger oxidation by the Baeyer-Villiger monooxygenase (BVMO) dmxR6 then yields monodictylactone in equilibrium with monodictyphenone. In the case of the cryptosporioptides biosynthesis, monodictylactone is reduced at C-12 to an alcohol (by the short chain dehydrogenases dmxR12 or dmxR8) and hydroxylated at C-5 by dmxR9, yielding the electron-rich aromatic which could eliminate H(2)O to form the ortho-quinonemethide, followed by tautomerisation to paraquinone and complete the formal reduction to produce the 10-methylgroup. Conjugate addition of C-4a-OH to the resulting paraquinone by the monooxygenase dmxR10 then gives cyclohexadienone, which is then reduced at C-5 by the short chain dehydrogenase dmxR3 to give the dihydroxanthone. The 6,7-epoxide in the cryptosporioptides could be introduced by the cytochrome P450 monooxygenase dmxL3. The highly reducing PKS dmxL2 manufactures butyrate, which is further carboxylated by dmxL1 to form ethylmalonate. It is not yet clear whether the carboxylation occurs while the butyrate is attached to the ACP of dmxL2, but this unusual fungal metabolite could then be esterified to O-5 by the O-acetyltransferase dmxR13. Finally, dimerization performed by dmxR5 gives the observed dimers cryptosporioptides A, B and C as the final products of the pathway. The chain is Anthrone oxygenase dmxR16 from Cryptosporiopsis sp. (strain 8999).